The chain runs to 342 residues: Aspartate carbamoyltransferase catalytic subunit (342 aa).

The carbamoyl phosphate site is built by R54 and T55. L-aspartate is bound at residue K82. Positions 104, 134, and 137 each coordinate carbamoyl phosphate. Residues R177 and R232 each coordinate L-aspartate. Carbamoyl phosphate-binding residues include G277 and P278.

It belongs to the aspartate/ornithine carbamoyltransferase superfamily. ATCase family. Heterododecamer (2C3:3R2) of six catalytic PyrB chains organized as two trimers (C3), and six regulatory PyrI chains organized as three dimers (R2).

The catalysed reaction is carbamoyl phosphate + L-aspartate = N-carbamoyl-L-aspartate + phosphate + H(+). It participates in pyrimidine metabolism; UMP biosynthesis via de novo pathway; (S)-dihydroorotate from bicarbonate: step 2/3. Functionally, catalyzes the condensation of carbamoyl phosphate and aspartate to form carbamoyl aspartate and inorganic phosphate, the committed step in the de novo pyrimidine nucleotide biosynthesis pathway. The sequence is that of Aspartate carbamoyltransferase catalytic subunit from Pseudarthrobacter chlorophenolicus (strain ATCC 700700 / DSM 12829 / CIP 107037 / JCM 12360 / KCTC 9906 / NCIMB 13794 / A6) (Arthrobacter chlorophenolicus).